The following is a 276-amino-acid chain: MKGEYREQKSNEMFSKLPHHQQQQQQQQQQHSLTSHFHLSSTVTPTVDDSSIEVVRRPRGRPPGSKNKPKPPVFVTRDTDPPMSPYILEVPSGNDVVEAINRFCRRKSIGVCVLSGSGSVANVTLRQPSPAALGSTITFHGKFDLLSVSATFLPPPPRTSLSPPVSNFFTVSLAGPQGQIIGGFVAGPLISAGTVYVIAASFNNPSYHRLPAEEEQKHSAGTGEREGQSPPVSGGGEESGQMAGSGGESCGVSMYSCHMGGSDVIWAPTARAPPPY.

Positions 1 to 10 (MKGEYREQKS) are enriched in basic and acidic residues. Disordered stretches follow at residues 1–80 (MKGE…RDTD) and 212–248 (AEEE…SGGE). Composition is skewed to low complexity over residues 20–31 (HQQQQQQQQQQH) and 40–49 (SSTVTPTVDD). A DNA-binding region (a.T hook) is located at residues 56–68 (RRPRGRPPGSKNK). A PPC domain is found at 80–230 (DPPMSPYILE…GTGEREGQSP (151 aa)). A compositionally biased stretch (basic and acidic residues) spans 212–227 (AEEEQKHSAGTGEREG). Residues 233-248 (SGGGEESGQMAGSGGE) are compositionally biased toward gly residues.

Its subcellular location is the nucleus. Transcription factor that specifically binds AT-rich DNA sequences related to the nuclear matrix attachment regions (MARs). The chain is AT-hook motif nuclear-localized protein 17 from Arabidopsis thaliana (Mouse-ear cress).